A 218-amino-acid chain; its full sequence is Small ribosomal subunit protein uS3 (218 aa).

In terms of domain architecture, KH type-2 spans 38–106; the sequence is IRDYVAKRLS…RVHINIVEIK (69 aa).

The protein belongs to the universal ribosomal protein uS3 family. Part of the 30S ribosomal subunit. Forms a tight complex with proteins S10 and S14.

Functionally, binds the lower part of the 30S subunit head. Binds mRNA in the 70S ribosome, positioning it for translation. The chain is Small ribosomal subunit protein uS3 from Listeria monocytogenes serotype 4b (strain F2365).